Here is a 215-residue protein sequence, read N- to C-terminus: Pentapeptide repeat protein QnrB4 (215 aa).

Pentapeptide repeat domains lie at 25-104 (TFFN…SFMN) and 117-191 (ITNT…RGVD).

This sequence belongs to the pentapeptide repeat protein family.

Functionally, probably plays a role in resistance to quinolone antibiotics. Only inhibits ATP-dependent DNA supercoiling by E.coli gyrase at high concentration (30 uM). Protects E.coli gyrase supercoiling activity from inhibition by fluoroquinolones (ciprofloxacin) at 0.1 uM, does not protect M.tuberculosis gyrase activity. This is Pentapeptide repeat protein QnrB4 from Escherichia coli.